The primary structure comprises 290 residues: ATP synthase gamma chain (290 aa).

Belongs to the ATPase gamma chain family. As to quaternary structure, F-type ATPases have 2 components, CF(1) - the catalytic core - and CF(0) - the membrane proton channel. CF(1) has five subunits: alpha(3), beta(3), gamma(1), delta(1), epsilon(1). CF(0) has three main subunits: a, b and c.

It is found in the cell inner membrane. Its function is as follows. Produces ATP from ADP in the presence of a proton gradient across the membrane. The gamma chain is believed to be important in regulating ATPase activity and the flow of protons through the CF(0) complex. In Anaeromyxobacter dehalogenans (strain 2CP-1 / ATCC BAA-258), this protein is ATP synthase gamma chain.